The primary structure comprises 249 residues: Putative adhesin RC1281 (249 aa).

Residues 1–22 (MKKLLLIAAASTALLTSGLSFA) form the signal peptide.

In terms of biological role, adheres to biotinylated epithelial (Vero cell) proteins. The chain is Putative adhesin RC1281 from Rickettsia conorii (strain ATCC VR-613 / Malish 7).